Consider the following 262-residue polypeptide: tRNA (guanine-N(1)-)-methyltransferase (262 aa).

S-adenosyl-L-methionine contacts are provided by residues glycine 112 and 132 to 137 (IGDYIL).

The protein belongs to the RNA methyltransferase TrmD family. As to quaternary structure, homodimer.

Its subcellular location is the cytoplasm. The enzyme catalyses guanosine(37) in tRNA + S-adenosyl-L-methionine = N(1)-methylguanosine(37) in tRNA + S-adenosyl-L-homocysteine + H(+). In terms of biological role, specifically methylates guanosine-37 in various tRNAs. The polypeptide is tRNA (guanine-N(1)-)-methyltransferase (Desulfatibacillum aliphaticivorans).